We begin with the raw amino-acid sequence, 138 residues long: Basic phospholipase A2 BP-III (138 aa).

The first 16 residues, 1–16, serve as a signal peptide directing secretion; that stretch reads MRTLWIMAVLLVGVDG. Disulfide bonds link cysteine 42/cysteine 132, cysteine 44/cysteine 60, cysteine 59/cysteine 112, cysteine 65/cysteine 138, cysteine 66/cysteine 105, cysteine 73/cysteine 98, and cysteine 91/cysteine 103. Glycine 45 and glycine 47 together coordinate Ca(2+). Histidine 63 is a catalytic residue. Aspartate 106 is an active-site residue.

This sequence belongs to the phospholipase A2 family. Group II subfamily. K49 sub-subfamily. Requires Ca(2+) as cofactor. In terms of tissue distribution, expressed by the venom gland.

It is found in the secreted. The catalysed reaction is a 1,2-diacyl-sn-glycero-3-phosphocholine + H2O = a 1-acyl-sn-glycero-3-phosphocholine + a fatty acid + H(+). Its function is as follows. Snake venom phospholipase A2 (PLA2) that has low phospholipase A2 activity. Shows anticoagulant activities, strong myolytic activity, infiltration of polymorphonuclear cells, and edema in stromal tissues. Induces cell death of Jurkat cells in a concentration dependent manner. PLA2 catalyzes the calcium-dependent hydrolysis of the 2-acyl groups in 3-sn-phosphoglycerides. In Protobothrops flavoviridis (Habu), this protein is Basic phospholipase A2 BP-III.